The following is a 155-amino-acid chain: Cyanate hydratase (155 aa).

Residues Arg-101, Glu-104, and Ser-127 contribute to the active site.

This sequence belongs to the cyanase family.

It catalyses the reaction cyanate + hydrogencarbonate + 3 H(+) = NH4(+) + 2 CO2. Catalyzes the reaction of cyanate with bicarbonate to produce ammonia and carbon dioxide. This Coccidioides posadasii (strain C735) (Valley fever fungus) protein is Cyanate hydratase.